The primary structure comprises 117 residues: Hemerythrin subunit alpha (117 aa).

7 residues coordinate Fe cation: histidine 24, histidine 53, glutamate 57, histidine 72, histidine 76, histidine 105, and aspartate 110.

This sequence belongs to the hemerythrin family. As to quaternary structure, octamer composed of two types of chains: alpha and beta.

In terms of biological role, hemerythrin is a respiratory protein in blood cells of certain marine worms. The oxygen-binding site in each chain contains two iron atoms. The protein is Hemerythrin subunit alpha of Lingula anatina (Brachiopod).